Consider the following 168-residue polypeptide: uncharacterized protein (168 aa).

The interval 1–52 (MVLGLASFPESLSSQSETATQPRRPSVKWDLGSDYRKGTEETTASGSNFRRE) is disordered. Residues 10 to 23 (ESLSSQSETATQPR) are compositionally biased toward polar residues. Residues 31–40 (LGSDYRKGTE) are compositionally biased toward basic and acidic residues.

This is an uncharacterized protein from Mus musculus (Mouse).